Here is a 156-residue protein sequence, read N- to C-terminus: MDIRKVKKLIELLEESGIDELEIREGEESVRISRHSKTAAQPVYAQAPAFAAPVAAPAPAAAAPAAAAAESAPAAPKLNGNVVRSPMVGTFYRAASPTSANFVEVGQSVKKGDILCIVEAMKMMNHIEAEVSGTIESILVENGQPVEFDQPLFTIV.

The 77-residue stretch at 80 to 156 (GNVVRSPMVG…EFDQPLFTIV (77 aa)) folds into the Biotinyl-binding domain. At Lys122 the chain carries N6-biotinyllysine.

Homodimer.

It functions in the pathway lipid metabolism; fatty acid biosynthesis. Its function is as follows. This protein is a component of the acetyl coenzyme A carboxylase complex; first, biotin carboxylase catalyzes the carboxylation of the carrier protein and then the transcarboxylase transfers the carboxyl group to form malonyl-CoA. This Pseudomonas aeruginosa (strain ATCC 15692 / DSM 22644 / CIP 104116 / JCM 14847 / LMG 12228 / 1C / PRS 101 / PAO1) protein is Biotin carboxyl carrier protein of acetyl-CoA carboxylase (accB).